The primary structure comprises 1294 residues: Ethylene-insensitive protein 2 (1294 aa).

Topologically, residues 1 to 12 (MEAEIVNVRPQL) are cytoplasmic. The chain crosses the membrane as a helical span at residues 13–33 (GFIQRMVPALLPVLLVSVGYI). At 34–50 (DPGKWVANIEGGARFGY) the chain is on the extracellular side. A helical membrane pass occupies residues 51–71 (DLVAITLLFNFAAILCQYVAA). The Cytoplasmic segment spans residues 72–105 (RISVVTGKHLAQICNEEYDKWTCMFLGIQAEFSA). Residues 106 to 126 (ILLDLTMVVGVAHALNLLFGV) form a helical membrane-spanning segment. A topological domain (extracellular) is located at residue Glu127. Residues 128–148 (LSTGVFLAAMDAFLFPVFASF) form a helical membrane-spanning segment. At 149 to 155 (LENGMAN) the chain is on the cytoplasmic side. The chain crosses the membrane as a helical span at residues 156 to 176 (TVSIYSAGLVLLLYVSGVLLS). Residues 177–194 (QSEIPLSMNGVLTRLNGE) lie on the Extracellular side of the membrane. Residues 195-215 (SAFALMGLLGASIVPHNFYIH) form a helical membrane-spanning segment. At 216–237 (SYFAGESTSSSDVDKSSLCQDH) the chain is on the cytoplasmic side. A helical transmembrane segment spans residues 238 to 258 (LFAIFGVFSGLSLVNYVLMNA). The Extracellular portion of the chain corresponds to 259–287 (AANVFHSTGLVVLTFHDALSLMEQVFMSP). A helical membrane pass occupies residues 288 to 308 (LIPVVFLMLLFFSSQITALAW). Topologically, residues 309–334 (AFGGEVVLHDFLKIEIPAWLHRATIR) are cytoplasmic. The next 2 helical transmembrane spans lie at 335–355 (ILAV…GIYQ) and 356–376 (LLIF…IPLF). Residues 377–397 (RIASSRQIMGVHKIPQVGEFL) lie on the Cytoplasmic side of the membrane. Residues 398–418 (ALTTFLGFLGLNVVFVVEMVF) form a helical membrane-spanning segment. At 419-440 (GSSDWAGGLRWNTVMGTSIQYT) the chain is on the extracellular side. The helical transmembrane segment at 441 to 461 (TLLVSSCASLCLILWLAATPL) threads the bilayer. Topologically, residues 462–1294 (KSASNRAEAQ…KNVTAYGSLG (833 aa)) are cytoplasmic. 2 disordered regions span residues 534–561 (TDQE…SSLK) and 623–662 (ETEE…SLSR). The segment covering 536 to 550 (QEIRSSPPEERELDV) has biased composition (basic and acidic residues). Ser645, Ser659, and Ser757 each carry phosphoserine. Thr819 bears the Phosphothreonine mark. Ser924 bears the Phosphoserine mark. The Nuclear localization signal motif lies at 1262-1269 (LKRYKRRL). The tract at residues 1269–1294 (LSNKPVGMNQDGPGSRKNVTAYGSLG) is disordered. Ser1283 bears the Phosphoserine mark.

It belongs to the NRAMP (TC 2.A.55) family. As to quaternary structure, interacts (via NLS) with ETR1. Interacts (via C-terminus) with EER5 and the COP9 signalosome subunits CSN3, CSN6A and CSN6B. Interacts with ETP1 and ETP2. Interacts with CTR1. Interacts with all members of the ethylene receptor family, including ETR1, ETR2, ERS1, ERS2 and EIN4. Binds to MRF3/ECIP1. Interacts with several P-body components, such as XRN4/EIN5, PAB2, PAB4 and PAB8. Binds to ENAP1 in the presence of ethylene; this reaction facilitates its association with histone. Phosphorylated by CTR1 on at least 4 sites. Phosphorylation of Ser-645 and Ser-924 is involved in repressing EIN2 signaling. Loss of phosphorylation results in nuclear localization of the C-terminus of EIN2. In terms of tissue distribution, localized to the guard cells after methyl jasmonate treatment.

Its subcellular location is the endoplasmic reticulum membrane. It localises to the nucleus. It is found in the cytoplasm. Functionally, central factor in signaling pathways regulated by ethylene (ET) and involved in various processes including development, plant defense, senescence, nucleotide sugar flux, and tropisms. Necessary for ethylene-mediated gene regulation, and for the induction of some genes by ozone. Acts downstream of ET receptors, and upstream of ethylene regulated transcription factors. Required for cytokinin-mediated processes. Seems to be implicated in cross-talk between ET, jasmonate and other pathways. Probably not involved in iron uptake. Has a short half-life and undergoes rapid proteasome-mediated turnover in the absence of ethylene. Required for ethylene-induced EIN3 stabilization via proteasomal degradation of EBF1/EBF2 proteins. Regulates the leaf senescence induced by methyl jasmonate, ethylene and abscisic acid. Required during salt stress to confer resistance. In terms of biological role, trafficking signal inducing ethylene response. The nuclear localization is both necessary and sufficient to activate EIN3-mediated transcription and ethylene responses. Involved in ethylene (ET)-mediated signaling pathways by triggering histone acetylation of H3K14 and H3K23 in an ENAP1-dependent manner, thus influencing the expression of ethylene-responsive genes. Necessary and sufficient for 3'-UTR-mediated translational repression of EBF1 and EBF2 mRNAs. Ethylene induces EIN2-CEND to associate with 3' UTRs in cytoplasmic foci and target EBF1/2 mRNAs to cytoplasmic processing-body (P-body). MPK6 regulates the cleavage and nuclear translocation of EIN2-CEND under methyl jasmonate treatment. Required for EIN3 accumulation. This is Ethylene-insensitive protein 2 from Arabidopsis thaliana (Mouse-ear cress).